A 385-amino-acid polypeptide reads, in one-letter code: tRNA-specific 2-thiouridylase MnmA (385 aa).

ATP-binding positions include 29–36 (GLSGGVDS) and L55. The active-site Nucleophile is C116. C116 and C225 are disulfide-bonded. Position 141 (G141) interacts with ATP. An interaction with tRNA region spans residues 175–177 (KDQ). C225 acts as the Cysteine persulfide intermediate in catalysis. Residues 330–331 (RY) are interaction with tRNA.

Belongs to the MnmA/TRMU family.

The protein localises to the cytoplasm. The enzyme catalyses S-sulfanyl-L-cysteinyl-[protein] + uridine(34) in tRNA + AH2 + ATP = 2-thiouridine(34) in tRNA + L-cysteinyl-[protein] + A + AMP + diphosphate + H(+). Its function is as follows. Catalyzes the 2-thiolation of uridine at the wobble position (U34) of tRNA, leading to the formation of s(2)U34. In Prochlorococcus marinus (strain MIT 9301), this protein is tRNA-specific 2-thiouridylase MnmA.